We begin with the raw amino-acid sequence, 345 residues long: Beta-2-glycoprotein 1 (345 aa).

The N-terminal stretch at 1 to 19 is a signal peptide; the sequence is MVSPVLALFSAFLCHVAIA. 4 consecutive Sushi domains span residues 21–81, 82–139, 140–202, and 203–262; these read RICP…RCVP, RVCP…ACAR, ITCP…ECLE, and VKCP…TCRE. Intrachain disulfides connect cysteine 23/cysteine 66, cysteine 51/cysteine 79, cysteine 84/cysteine 124, cysteine 110/cysteine 137, cysteine 142/cysteine 188, cysteine 174/cysteine 200, cysteine 205/cysteine 248, cysteine 234/cysteine 260, cysteine 264/cysteine 315, cysteine 300/cysteine 325, and cysteine 307/cysteine 345. Threonine 33 is a glycosylation site (O-linked (GalNAc...) threonine). N-linked (GlcNAc...) asparagine glycosylation is found at asparagine 105, asparagine 117, asparagine 162, asparagine 183, and asparagine 193. The segment at 263–345 is sushi-like; it reads SCKLPVKKAT…KTDASELTPC (83 aa).

In terms of tissue distribution, expressed by the liver and secreted in plasma.

Its subcellular location is the secreted. In terms of biological role, binds to various kinds of negatively charged substances such as heparin, phospholipids, and dextran sulfate. May prevent activation of the intrinsic blood coagulation cascade by binding to phospholipids on the surface of damaged cells. The protein is Beta-2-glycoprotein 1 (Apoh) of Mus musculus (Mouse).